A 128-amino-acid chain; its full sequence is UPF0325 protein PMI2289 (128 aa).

This sequence belongs to the UPF0325 family.

This chain is UPF0325 protein PMI2289, found in Proteus mirabilis (strain HI4320).